We begin with the raw amino-acid sequence, 1922 residues long: Endoribonuclease Dicer (1922 aa).

The Helicase ATP-binding domain maps to 51–227; it reads LLEAALDHNT…ELEEKIQKLE (177 aa). 64-71 contacts ATP; the sequence is LNTGSGKT. The short motif at 175-178 is the DECH box element; it reads DECH. Residues 256–595 form a required for interaction with PRKRA and TARBP2 region; sequence DCGPFTDRSG…LRNKCSKSVD (340 aa). Residues 409–433 form a disordered region; that stretch reads YVSWSDSEDDDEDEEIEEKEKPETN. A phosphoserine mark is found at S413 and S415. Residues 414–425 show a composition bias toward acidic residues; the sequence is DSEDDDEDEEIE. In terms of domain architecture, Helicase C-terminal spans 433–602; it reads NFPSPFTNIL…SVDTGETDID (170 aa). The Dicer dsRNA-binding fold domain occupies 630 to 722; that stretch reads AIGHINRYCA…MPVGKETVKY (93 aa). The PAZ domain maps to 895–1042; the sequence is KFMEDIEKSE…LVPELCAIHP (148 aa). S1016 and S1160 each carry phosphoserine. Residues 1276-1403 enclose the RNase III 1 domain; the sequence is DSEQSPSIGY…TDKWEKDEMT (128 aa). Mg(2+) contacts are provided by E1316, D1395, and E1398. 3 positions are modified to phosphoserine: S1460, S1468, and S1470. The RNase III 2 domain maps to 1666–1824; it reads FENFEKKINY…LAGAIYMDSG (159 aa). Mg(2+)-binding residues include E1705, D1810, and E1813. One can recognise a DRBM domain in the interval 1849 to 1914; the sequence is VPRSPVRELL…ARRALRSLKA (66 aa). S1868 carries the phosphoserine modification.

The protein belongs to the helicase family. Dicer subfamily. Component of the RISC loading complex (RLC), or micro-RNA (miRNA) loading complex (miRLC), which is composed of DICER1, AGO2 and TARBP2; DICER1 and TARBP2 are required to process precursor miRNAs (pre-miRNAs) to mature miRNAs and then load them onto AGO2. Note that the trimeric RLC/miRLC is also referred to as RISC. Interacts with DHX9, AGO1, PIWIL1 and PRKRA. Associates with the 60S ribosome. Interacts with BCDIN3D. Interacts with AGO2, TARBP2, EIF6, MOV10 and RPL7A (60S ribosome subunit); they form a large RNA-induced silencing complex (RISC). Interacts (via Dicer dsRNA-binding fold domain) with ALOX5 (via PLAT domain); this interaction enhances arachidonate 5-lipoxygenase activity and modifies the miRNA precursor processing activity of DICER1. As to quaternary structure, (Microbial infection) Interacts with ebolavirus transcriptional activator VP30; this interaction prevents TARBP2/TRBP binding to DICER1 and thus allows the virus to counteract host RNA silencing. In terms of assembly, (Microbial infection) Interacts with ebolavirus transcriptional activator VP35; this interaction prevents TARBP2/TRBP binding to DICER1 and thus allows the virus to counteract host RNA silencing. Mg(2+) is required as a cofactor. Mn(2+) serves as cofactor.

It localises to the cytoplasm. The protein localises to the perinuclear region. It carries out the reaction Endonucleolytic cleavage to 5'-phosphomonoester.. Double-stranded RNA (dsRNA) endoribonuclease playing a central role in short dsRNA-mediated post-transcriptional gene silencing. Cleaves naturally occurring long dsRNAs and short hairpin pre-microRNAs (miRNA) into fragments of twenty-one to twenty-three nucleotides with 3' overhang of two nucleotides, producing respectively short interfering RNAs (siRNA) and mature microRNAs. SiRNAs and miRNAs serve as guide to direct the RNA-induced silencing complex (RISC) to complementary RNAs to degrade them or prevent their translation. Gene silencing mediated by siRNAs, also called RNA interference, controls the elimination of transcripts from mobile and repetitive DNA elements of the genome but also the degradation of exogenous RNA of viral origin for instance. The miRNA pathway on the other side is a mean to specifically regulate the expression of target genes. This chain is Endoribonuclease Dicer (DICER1), found in Homo sapiens (Human).